A 444-amino-acid chain; its full sequence is Cell wall mannoprotein PST1 (444 aa).

The signal sequence occupies residues 1-19 (MQLHSLIASTALLITSALA). N-linked (GlcNAc...) asparagine glycans are attached at residues N57, N76, N83, N86, N196, N210, N228, N235, N242, N263, N268, N280, N292, N305, and N329. Composition is skewed to low complexity over residues 359–381 (SVKL…SKSS) and 395–417 (KAAA…KSSK). Positions 359-418 (SVKLSSTSKSQSSQTTAKVSKSSSKAEEKKFTSGDIKAAASASSVSSSSASSSSSKSSKG) are disordered. N419 carries GPI-anchor amidated asparagine lipidation. Positions 420–444 (AAIMAPIGQTTPLVGLLTAIIMSIM) are cleaved as a propeptide — removed in mature form.

Belongs to the SPS2 family. Post-translationally, extensively N- and O-mannosylated.

The protein resides in the cell membrane. It localises to the secreted. It is found in the cell wall. In terms of biological role, has a partially redundant function to ECM33 in cell wall integrity. May be involved in a repair mechanism activated in response to cell wall damage. The polypeptide is Cell wall mannoprotein PST1 (PST1) (Saccharomyces cerevisiae (strain YJM789) (Baker's yeast)).